Consider the following 200-residue polypeptide: ATP-dependent Clp protease proteolytic subunit 2 (200 aa).

The Nucleophile role is filled by Ser96. The active site involves His121.

This sequence belongs to the peptidase S14 family. In terms of assembly, fourteen ClpP subunits assemble into 2 heptameric rings which stack back to back to give a disk-like structure with a central cavity, resembling the structure of eukaryotic proteasomes.

It localises to the cytoplasm. It carries out the reaction Hydrolysis of proteins to small peptides in the presence of ATP and magnesium. alpha-casein is the usual test substrate. In the absence of ATP, only oligopeptides shorter than five residues are hydrolyzed (such as succinyl-Leu-Tyr-|-NHMec, and Leu-Tyr-Leu-|-Tyr-Trp, in which cleavage of the -Tyr-|-Leu- and -Tyr-|-Trp bonds also occurs).. Functionally, cleaves peptides in various proteins in a process that requires ATP hydrolysis. Has a chymotrypsin-like activity. Plays a major role in the degradation of misfolded proteins. The protein is ATP-dependent Clp protease proteolytic subunit 2 of Synechococcus sp. (strain JA-2-3B'a(2-13)) (Cyanobacteria bacterium Yellowstone B-Prime).